A 110-amino-acid chain; its full sequence is DNA-directed RNA polymerase subunit omega (110 aa).

It belongs to the RNA polymerase subunit omega family. In terms of assembly, the RNAP catalytic core consists of 2 alpha, 1 beta, 1 beta' and 1 omega subunit. When a sigma factor is associated with the core the holoenzyme is formed, which can initiate transcription.

The enzyme catalyses RNA(n) + a ribonucleoside 5'-triphosphate = RNA(n+1) + diphosphate. In terms of biological role, promotes RNA polymerase assembly. Latches the N- and C-terminal regions of the beta' subunit thereby facilitating its interaction with the beta and alpha subunits. In Mycobacterium leprae (strain Br4923), this protein is DNA-directed RNA polymerase subunit omega.